The following is a 397-amino-acid chain: Phosphoglycerate kinase (397 aa).

Substrate contacts are provided by residues D21–N23, R37, H60–R63, R119, and R152. Residues K203, G294, E325, and G354–S357 contribute to the ATP site.

It belongs to the phosphoglycerate kinase family. Monomer.

It localises to the cytoplasm. It catalyses the reaction (2R)-3-phosphoglycerate + ATP = (2R)-3-phospho-glyceroyl phosphate + ADP. The protein operates within carbohydrate degradation; glycolysis; pyruvate from D-glyceraldehyde 3-phosphate: step 2/5. The protein is Phosphoglycerate kinase of Chlorobium phaeovibrioides (strain DSM 265 / 1930) (Prosthecochloris vibrioformis (strain DSM 265)).